A 378-amino-acid polypeptide reads, in one-letter code: Beta sliding clamp (378 aa).

This sequence belongs to the beta sliding clamp family. As to quaternary structure, forms a ring-shaped head-to-tail homodimer around DNA which binds and tethers DNA polymerases and other proteins to the DNA. The DNA replisome complex has a single clamp-loading complex (3 tau and 1 each of delta, delta', psi and chi subunits) which binds 3 Pol III cores (1 core on the leading strand and 2 on the lagging strand) each with a beta sliding clamp dimer. Additional proteins in the replisome are other copies of gamma, psi and chi, Ssb, DNA helicase and RNA primase. Interacts with YabA, and via YabA, with DnaA. During sporulation probably interacts with SirA.

The protein localises to the cytoplasm. The protein resides in the nucleoid. Confers DNA tethering and processivity to DNA polymerases and other proteins. Acts as a clamp, forming a ring around DNA (a reaction catalyzed by the clamp-loading complex) which diffuses in an ATP-independent manner freely and bidirectionally along dsDNA. Initially characterized for its ability to contact the catalytic subunit of DNA polymerase III (Pol III), a complex, multichain enzyme responsible for most of the replicative synthesis in bacteria; Pol III exhibits 3'-5' exonuclease proofreading activity. The beta chain is required for initiation of replication as well as for processivity of DNA replication. Overexpression in vivo stimulates inititation of DNA replication from oriC. Increased levels of DnaN remove YabA from its association with DnaA on the chromosome, allowing DnaA to bind to its targets. Its interaction with DnaA probably serves as a sink to prevent excessive replication initiation. This Bacillus subtilis (strain 168) protein is Beta sliding clamp.